We begin with the raw amino-acid sequence, 449 residues long: Exodeoxyribonuclease 7 large subunit (449 aa).

The protein belongs to the XseA family. In terms of assembly, heterooligomer composed of large and small subunits.

The protein localises to the cytoplasm. The catalysed reaction is Exonucleolytic cleavage in either 5'- to 3'- or 3'- to 5'-direction to yield nucleoside 5'-phosphates.. Its function is as follows. Bidirectionally degrades single-stranded DNA into large acid-insoluble oligonucleotides, which are then degraded further into small acid-soluble oligonucleotides. The protein is Exodeoxyribonuclease 7 large subunit of Aliivibrio fischeri (strain ATCC 700601 / ES114) (Vibrio fischeri).